The chain runs to 99 residues: Putative membrane protein insertion efficiency factor (99 aa).

The protein belongs to the UPF0161 family.

It localises to the cell inner membrane. In terms of biological role, could be involved in insertion of integral membrane proteins into the membrane. This is Putative membrane protein insertion efficiency factor from Salinibacter ruber (strain DSM 13855 / M31).